Here is a 160-residue protein sequence, read N- to C-terminus: Transcriptional repressor NrdR (160 aa).

The segment at 3–34 is a zinc-finger region; that stretch reads CPFCGNADTQVVDSRVSEEGDTIRRRRRCLSC. The ATP-cone domain occupies 49 to 139; that stretch reads PSVVKRDGSR…VYKSFEDIGE (91 aa).

Belongs to the NrdR family. The cofactor is Zn(2+).

Functionally, negatively regulates transcription of bacterial ribonucleotide reductase nrd genes and operons by binding to NrdR-boxes. The polypeptide is Transcriptional repressor NrdR (Bordetella bronchiseptica (strain ATCC BAA-588 / NCTC 13252 / RB50) (Alcaligenes bronchisepticus)).